We begin with the raw amino-acid sequence, 780 residues long: Myosin heavy chain kinase C (780 aa).

The region spanning 40-243 is the Alpha-type protein kinase domain; the sequence is IGDDLKPKWT…VCDFLKLKPI (204 aa). Residues 310 to 495 are disordered; sequence RIRAQQQQKS…MEQTPDRSEF (186 aa). The span at 337 to 350 shows a compositional bias: low complexity; that stretch reads QQSPSSPTSKPVPQ. A compositionally biased stretch (polar residues) spans 353–376; that stretch reads KTPSQSNVVNKSPVSPPKENSNVK. Residues 380–436 are compositionally biased toward low complexity; it reads DNINNNNSSISSNNDNSNNNNNNNDNINNSSNSSSVNSNSSSVSSSSSSSSSSSSSS. Polar residues predominate over residues 437 to 450; that stretch reads TTNAAPISIQVSRN. Residues 458–488 are compositionally biased toward low complexity; it reads IQPSSAAASASSTSSSNVPTPESTSTSSMEQ. WD repeat units lie at residues 507–546, 549–589, 591–628, 631–668, 671–708, and 748–780; these read DTVR…HVTN, AHGK…TIKE, KESN…CVKT, GHTR…ILTN, GHEG…CVNT, and NTRS…WDKM.

Belongs to the protein kinase superfamily. Alpha-type protein kinase family. ALPK subfamily. Interacts with myosin II heavy chain (mhcA). Post-translationally, autophosphorylated in vitro.

The protein resides in the cytoplasm. The protein localises to the cell cortex. It is found in the membrane. Its subcellular location is the cleavage furrow. It carries out the reaction L-threonyl-[myosin heavy-chain] + ATP = O-phospho-L-threonyl-[myosin heavy-chain] + ADP + H(+). Phosphorylates threonine at 'Thr-1823', 'Thr-1833' and 'Thr-2029' in the C-terminal tail region of myosin II heavy chain (mhcA). This phosphorylation is critical in actin-activated ATPase activity of the myosin and regulating the assembly and disassembly of myosin II filament. In vitro, catalytic domain phosphorylates mhcA, myelin basic protein, myosin regulatory light chain, casein and caldesmon. Drives the disassembly of myosin II filaments for efficient cytokinesis and recycling of myosin II that occurs during late cytokinesis. Can be activated in vitro by autophosphorylation. The protein is Myosin heavy chain kinase C (mhkC) of Dictyostelium discoideum (Social amoeba).